A 209-amino-acid chain; its full sequence is Ribonuclease HII (209 aa).

The 192-residue stretch at 7-198 (GPVAGVDEAG…VAKAHQEWLH (192 aa)) folds into the RNase H type-2 domain. 3 residues coordinate a divalent metal cation: Asp13, Glu14, and Asp107.

This sequence belongs to the RNase HII family. Mn(2+) is required as a cofactor. Mg(2+) serves as cofactor.

The protein localises to the cytoplasm. The enzyme catalyses Endonucleolytic cleavage to 5'-phosphomonoester.. Functionally, endonuclease that specifically degrades the RNA of RNA-DNA hybrids. This Corynebacterium glutamicum (strain R) protein is Ribonuclease HII.